We begin with the raw amino-acid sequence, 304 residues long: Recombination-associated protein RdgC (304 aa).

Belongs to the RdgC family.

It localises to the cytoplasm. The protein localises to the nucleoid. Functionally, may be involved in recombination. The protein is Recombination-associated protein RdgC of Shewanella putrefaciens (strain CN-32 / ATCC BAA-453).